Reading from the N-terminus, the 359-residue chain is Photosystem II protein D1 2 (359 aa).

3 helical membrane-spanning segments follow: residues 29-46 (YVGW…AATT), 118-133 (HFLI…EWEL), and 142-156 (WICV…AASA). His-118 lines the chlorophyll a pocket. Tyr-126 serves as a coordination point for pheophytin a. 2 residues coordinate [CaMn4O5] cluster: Asp-170 and Glu-189. The chain crosses the membrane as a helical span at residues 197–218 (FHMLGVAGVFGGSLFSAMHGSL). His-198 lines the chlorophyll a pocket. A quinone contacts are provided by residues His-215 and 264–265 (SF). His-215 contacts Fe cation. Position 272 (His-272) interacts with Fe cation. A helical membrane pass occupies residues 274–288 (FLAAWPVVGIWFTAL). Positions 332, 333, 342, and 344 each coordinate [CaMn4O5] cluster. Positions 345 to 359 (AAESTPVALQAPAIG) are excised as a propeptide.

This sequence belongs to the reaction center PufL/M/PsbA/D family. PSII is composed of 1 copy each of membrane proteins PsbA, PsbB, PsbC, PsbD, PsbE, PsbF, PsbH, PsbI, PsbJ, PsbK, PsbL, PsbM, PsbT, PsbX, PsbY, PsbZ, Psb30/Ycf12, peripheral proteins PsbO, CyanoQ (PsbQ), PsbU, PsbV and a large number of cofactors. It forms dimeric complexes. It depends on The D1/D2 heterodimer binds P680, chlorophylls that are the primary electron donor of PSII, and subsequent electron acceptors. It shares a non-heme iron and each subunit binds pheophytin, quinone, additional chlorophylls, carotenoids and lipids. D1 provides most of the ligands for the Mn4-Ca-O5 cluster of the oxygen-evolving complex (OEC). There is also a Cl(-1) ion associated with D1 and D2, which is required for oxygen evolution. The PSII complex binds additional chlorophylls, carotenoids and specific lipids. as a cofactor. In terms of processing, tyr-161 forms a radical intermediate that is referred to as redox-active TyrZ, YZ or Y-Z. Post-translationally, C-terminally processed by CtpA; processing is essential to allow assembly of the oxygen-evolving complex and thus photosynthetic growth.

It is found in the cellular thylakoid membrane. It catalyses the reaction 2 a plastoquinone + 4 hnu + 2 H2O = 2 a plastoquinol + O2. Functionally, photosystem II (PSII) is a light-driven water:plastoquinone oxidoreductase that uses light energy to abstract electrons from H(2)O, generating O(2) and a proton gradient subsequently used for ATP formation. It consists of a core antenna complex that captures photons, and an electron transfer chain that converts photonic excitation into a charge separation. The D1/D2 (PsbA/PsbD) reaction center heterodimer binds P680, the primary electron donor of PSII as well as several subsequent electron acceptors. The chain is Photosystem II protein D1 2 from Synechococcus sp. (strain CC9311).